The sequence spans 348 residues: MKILVIGPSWVGDMMMSQSLYRTLQARYPQAIIDVMAPAWCRPLLSRMPEVNEAIPMPLGHGALEIGERRKLGHSLREKRYDRAYVLPNSFKSALVPFFAGIPHRTGWRGEMRYGLLNDVRVLDKEAWPLMVERYIALAYDKGIMRTAQDLPQPLLWPQLQVSEGEKSYTCNQFSLSSERPMIGFCPGAEFGPAKRWPHYHYAELAKQLIDEGYQVVLFGSAKDHEAGNEILAALNTEQQAWCRNLAGETQLDQAVILIAACKAIVTNDSGLMHVAAALNRPLVALYGPSSPDFTPPLSHKARVIRLITGYHKVRKGDAAEGYHQSLIDITPQRVLEELNALLLQEEA.

Belongs to the glycosyltransferase 9 family.

The catalysed reaction is an L-alpha-D-Hep-(1-&gt;5)-[alpha-Kdo-(2-&gt;4)]-alpha-Kdo-(2-&gt;6)-lipid A + ADP-L-glycero-beta-D-manno-heptose = an L-alpha-D-Hep-(1-&gt;3)-L-alpha-D-Hep-(1-&gt;5)-[alpha-Kdo-(2-&gt;4)]-alpha-Kdo-(2-&gt;6)-lipid A + ADP + H(+). The enzyme catalyses L-alpha-D-Hep-(1-&gt;5)-[alpha-Kdo-(2-&gt;4)]-alpha-Kdo-(2-&gt;6)-lipid A (E. coli) + ADP-L-glycero-beta-D-manno-heptose = L-alpha-D-Hep-(1-&gt;3)-L-alpha-D-Hep-(1-&gt;5)-[alpha-Kdo-(2-&gt;4)]-alpha-Kdo-(2-&gt;6)-lipid A (E. coli) + ADP + H(+). Its pathway is bacterial outer membrane biogenesis; LPS core biosynthesis. Functionally, glycosyltransferase involved in the biosynthesis of the core oligosaccharide region of lipopolysaccharide (LPS). Catalyzes the addition of the second heptose unit to the heptosyl-Kdo2-lipid A module. The analog ADP-mannose can serve as an alternative donor in place of ADP-L-glycero-D-manno-heptose, but with lower efficiency. This chain is Lipopolysaccharide heptosyltransferase 2, found in Escherichia coli (strain K12).